Consider the following 907-residue polypeptide: Glutamate receptor 1 (907 aa).

Positions 1–18 (MPYIFAFFCTGFLGAVVG) are cleaved as a signal peptide. Residues 19-536 (ANFPNNIQIG…GVFSFLDPLA (518 aa)) are Extracellular-facing. N-linked (GlcNAc...) asparagine glycosylation is found at Asn63, Asn249, Asn257, Asn363, Asn401, and Asn406. Cysteines 75 and 323 form a disulfide. Residues Pro492, Thr494, and Arg499 each coordinate L-glutamate. Residues 537 to 557 (YEIWMCIVFAYIGVSVVLFLV) form a helical membrane-spanning segment. The Cytoplasmic segment spans residues 558–584 (SRFSPYEWHSEEFEEGRDQTTSDQSNE). The helical; Pore-forming intramembrane region spans 585 to 600 (FGIFNSLWFSLGAFMQ). The stretch at 601 to 603 (QGC) is an intramembrane region. A lipid anchor (S-palmitoyl cysteine) is attached at Cys603. The Cytoplasmic segment spans residues 604–609 (DISPRS). The chain crosses the membrane as a helical span at residues 610–630 (LSGRIVGGVWWFFTLIIISSY). Residues 631-805 (TANLAAFLTV…DKTSALSLSN (175 aa)) lie on the Extracellular side of the membrane. Ser645 is subject to Phosphoserine. Residues Ser668 and Thr669 each contribute to the L-glutamate site. Ser710 bears the Phosphoserine; by PKC mark. Glu719 lines the L-glutamate pocket. An intrachain disulfide couples Cys732 to Cys787. Residues 806-826 (VAGVFYILIGGLGLAMLVALI) traverse the membrane as a helical segment. Topologically, residues 827-907 (EFCYKSRSES…SGMPLGATGL (81 aa)) are cytoplasmic. Cys829 carries the S-palmitoyl cysteine lipid modification. Phosphoserine; by PKC, PKA and CAMK2 is present on Ser849. The disordered stretch occupies residues 857–881 (STLPRNSGAGASGGGGSGENGRVVS). Ser863 carries the phosphoserine; by PKC, PKA and PKG/PRKG2 modification. Residues 866 to 875 (GASGGGGSGE) are compositionally biased toward gly residues. Residues 904 to 907 (ATGL) carry the PDZ-binding motif.

It belongs to the glutamate-gated ion channel (TC 1.A.10.1) family. GRIA1 subfamily. Homotetramer or heterotetramer of pore-forming glutamate receptor subunits; heteromeric assembly can be the result of both receptor subtype and flip-flop forms and according the composition, one partner can be dominant with respect to the fast desensitizing current component, whereas the other can determine the steady-state component. Tetramers may be formed by the dimerization of dimers. Found in a complex with GRIA2, GRIA3, GRIA4, CNIH2, CNIH3, CACNG2, CACNG3, CACNG4, CACNG5, CACNG7 and CACNG8. Interacts with HIP1 and RASGRF2. Interacts with SYNDIG1 and GRIA2. Interacts with DLG1 (via C-terminus). Interacts with LRFN1. Interacts with PRKG2. Interacts with CNIH2 and CACNG2. Interacts with CACNG5; this interaction modulates the gating. Interacts (via C-terminus) with PDLIM4 (via LIM domain); this interaction as well as the interaction of PDLIM4 with alpha-actinin is required for their colocalization in early endosomes. Interacts with SNX27 (via PDZ domain); the interaction is required for recycling to the plasma membrane when endocytosed and prevent degradation in lysosomes. Interacts (via PDZ-binding motif) with SHANK3 (via PDZ domain). Interacts with CACNG3; associates GRIA1 with the adapter protein complex 4 (AP-4) to target GRIA1 to the somatodendritic compartment of neurons. Interacts with CACNG2; this interaction mediates traffick to the plasma membrane and modulation of desensitization. Interaction with CNIH2 and CNIH3; this interaction promotes expression at the plasma membrane and extensively modulates their gating properties by slowing deactivation and desensitization kinetics. Found in a complex with GRIA2, GRIA3, GRIA4, DLG4, CACNG8 and CNIH2. In terms of processing, phosphorylated at Ser-645. Phosphorylated at Ser-710 by PKC. Phosphorylated at Ser-849 by PKC, PKA and CAMK2. Phosphorylated at Ser-863 by PKC, PKA and PRKG2. Phosphorylation of Ser-863 is reduced by induction of long-term depression and increased by induction of long-term potentiation. Post-translationally, palmitoylated. Depalmitoylated by CPT1C and upon L-glutamate stimulation. ZDHHC3/GODZ specifically palmitoylates Cys-603, which leads to Golgi retention and decreased cell surface expression. In contrast, Cys-829 palmitoylation does not affect cell surface expression but regulates stimulation-dependent endocytosis. In terms of tissue distribution, detected in cerebellum (at protein level).

It localises to the cell membrane. Its subcellular location is the endoplasmic reticulum membrane. It is found in the postsynaptic cell membrane. The protein localises to the postsynaptic density membrane. The protein resides in the cell projection. It localises to the dendrite. Its subcellular location is the dendritic spine. It is found in the early endosome membrane. The protein localises to the recycling endosome membrane. The protein resides in the presynapse. It localises to the synapse. It carries out the reaction Ca(2+)(in) = Ca(2+)(out). The catalysed reaction is Na(+)(in) = Na(+)(out). It catalyses the reaction Mg(2+)(in) = Mg(2+)(out). The enzyme catalyses Li(+)(in) = Li(+)(out). It carries out the reaction K(+)(in) = K(+)(out). The catalysed reaction is Sr(2+)(in) = Sr(2+)(out). Glutamate-gated receptor activity inhibited by DNQX (6,7-dinitroquinoxaline-2,3-dione). Ionotropic glutamate receptor that functions as a ligand-gated cation channel, gated by L-glutamate and glutamatergic agonists such as alpha-amino-3-hydroxy-5-methyl-4-isoxazolepropionic acid (AMPA), quisqualic acid, and kainic acid. L-glutamate acts as an excitatory neurotransmitter at many synapses in the central nervous system. Binding of the excitatory neurotransmitter L-glutamate induces a conformation change, leading to the opening of the cation channel, and thereby converts the chemical signal to an electrical impulse upon entry of monovalent and divalent cations such as sodium and calcium. The receptor then desensitizes rapidly and enters in a transient inactive state, characterized by the presence of bound agonist. In the presence of CACNG2 or CACNG4 or CACNG7 or CACNG8, shows resensitization which is characterized by a delayed accumulation of current flux upon continued application of L-glutamate. Resensitization is blocked by CNIH2 through interaction with CACNG8 in the CACNG8-containing AMPA receptors complex. Calcium (Ca(2+)) permeability depends on subunits composition and, heteromeric channels containing edited GRIA2 subunit are calcium-impermeable. Also permeable to other divalents cations such as strontium(2+) and magnesium(2+) and monovalent cations such as potassium(1+) and lithium(1+). In Rattus norvegicus (Rat), this protein is Glutamate receptor 1.